The sequence spans 372 residues: MHNQAPIQRRKSTRIYVGNVPIGDGAPIAVQSMTNTRTTDVEATVNQIKALERVGADIVRVSVPTMDEAEAFKLIKQRVNVPLVADIHFDYRIALKVAEYGVDCLRINPGNIGNEERIRMVVDCARDKNIPIRIGVNAGSLEKDLQEKYGEPTPQALLESAMRHVDHLDRLNFAQFKVSVKASDVFLAVESYRLLAKQIDQPLHLGITEAGGARSGAVKSAIGLGLLLSEGIGDTLRVSLAADPVEEIKVGFDILKSLRIRSRGINFIACPTCSRQEFDVIGTVNALEQRLEDIITPMDVSIIGCVVNGPGEALVSTLGVTGGNKKSGLYEDGVRKDRLDNNDMIDQLEARIRAKASQLDEARRIDVQQVEK.

The [4Fe-4S] cluster site is built by Cys270, Cys273, Cys305, and Glu312.

It belongs to the IspG family. [4Fe-4S] cluster is required as a cofactor.

The enzyme catalyses (2E)-4-hydroxy-3-methylbut-2-enyl diphosphate + oxidized [flavodoxin] + H2O + 2 H(+) = 2-C-methyl-D-erythritol 2,4-cyclic diphosphate + reduced [flavodoxin]. Its pathway is isoprenoid biosynthesis; isopentenyl diphosphate biosynthesis via DXP pathway; isopentenyl diphosphate from 1-deoxy-D-xylulose 5-phosphate: step 5/6. Its function is as follows. Converts 2C-methyl-D-erythritol 2,4-cyclodiphosphate (ME-2,4cPP) into 1-hydroxy-2-methyl-2-(E)-butenyl 4-diphosphate. The sequence is that of 4-hydroxy-3-methylbut-2-en-1-yl diphosphate synthase (flavodoxin) from Shigella boydii serotype 18 (strain CDC 3083-94 / BS512).